The primary structure comprises 44 residues: Omega-plectoxin-Pt1a (44 aa).

Intrachain disulfides connect Cys-3–Cys-17, Cys-10–Cys-23, Cys-16–Cys-35, Cys-20–Cys-42, and Cys-25–Cys-33. Thr-44 is subject to Threonine amide. Thr-44 carries the O-palmitoyl threonine lipid modification.

The protein belongs to the neurotoxin 02 (plectoxin) family. 02 (plectoxin) subfamily. In terms of processing, contains 5 disulfide bonds. Post-translationally, acylation by palmitate is required for biological activity. As to expression, expressed by the venom gland.

The protein localises to the secreted. Its function is as follows. Toxin that inhibits presynaptic voltage-gated calcium channel (Cav) in Drosophila nerve terminals, most likely through specific block of the Cav2 channel (known as Dmca1A). The chain is Omega-plectoxin-Pt1a from Plectreurys tristis (Spider).